The following is a 130-amino-acid chain: Small ribosomal subunit protein uS9 (130 aa).

The protein belongs to the universal ribosomal protein uS9 family.

The protein is Small ribosomal subunit protein uS9 of Pectobacterium atrosepticum (strain SCRI 1043 / ATCC BAA-672) (Erwinia carotovora subsp. atroseptica).